Reading from the N-terminus, the 352-residue chain is Uroporphyrinogen decarboxylase (352 aa).

Residues 29-33, Phe48, Asp78, Tyr154, Ser209, and His322 contribute to the substrate site; that span reads RQAGR.

Belongs to the uroporphyrinogen decarboxylase family. As to quaternary structure, homodimer.

It localises to the cytoplasm. The enzyme catalyses uroporphyrinogen III + 4 H(+) = coproporphyrinogen III + 4 CO2. It functions in the pathway porphyrin-containing compound metabolism; protoporphyrin-IX biosynthesis; coproporphyrinogen-III from 5-aminolevulinate: step 4/4. Its function is as follows. Catalyzes the decarboxylation of four acetate groups of uroporphyrinogen-III to yield coproporphyrinogen-III. The polypeptide is Uroporphyrinogen decarboxylase (Bacillus pumilus (strain SAFR-032)).